A 186-amino-acid polypeptide reads, in one-letter code: Ribosome-recycling factor (186 aa).

Belongs to the RRF family.

It is found in the cytoplasm. Its function is as follows. Responsible for the release of ribosomes from messenger RNA at the termination of protein biosynthesis. May increase the efficiency of translation by recycling ribosomes from one round of translation to another. The polypeptide is Ribosome-recycling factor (Bordetella petrii (strain ATCC BAA-461 / DSM 12804 / CCUG 43448)).